We begin with the raw amino-acid sequence, 1394 residues long: DNA-directed RNA polymerase subunit beta (1394 aa).

The protein belongs to the RNA polymerase beta chain family. As to quaternary structure, the RNAP catalytic core consists of 2 alpha, 1 beta, 1 beta' and 1 omega subunit. When a sigma factor is associated with the core the holoenzyme is formed, which can initiate transcription.

It carries out the reaction RNA(n) + a ribonucleoside 5'-triphosphate = RNA(n+1) + diphosphate. Its function is as follows. DNA-dependent RNA polymerase catalyzes the transcription of DNA into RNA using the four ribonucleoside triphosphates as substrates. The polypeptide is DNA-directed RNA polymerase subunit beta (Anaplasma phagocytophilum (Ehrlichia phagocytophila)).